The primary structure comprises 56 residues: Large ribosomal subunit protein bL33 (56 aa).

It belongs to the bacterial ribosomal protein bL33 family.

The protein is Large ribosomal subunit protein bL33 of Histophilus somni (strain 129Pt) (Haemophilus somnus).